The sequence spans 189 residues: Pyridoxal 5'-phosphate synthase subunit PdxT (189 aa).

50–52 (GES) serves as a coordination point for L-glutamine. Cysteine 80 functions as the Nucleophile in the catalytic mechanism. Residues arginine 107 and 134–135 (IR) each bind L-glutamine. Active-site charge relay system residues include histidine 169 and glutamate 171.

Belongs to the glutaminase PdxT/SNO family. In the presence of PdxS, forms a dodecamer of heterodimers. Only shows activity in the heterodimer.

The catalysed reaction is aldehydo-D-ribose 5-phosphate + D-glyceraldehyde 3-phosphate + L-glutamine = pyridoxal 5'-phosphate + L-glutamate + phosphate + 3 H2O + H(+). The enzyme catalyses L-glutamine + H2O = L-glutamate + NH4(+). The protein operates within cofactor biosynthesis; pyridoxal 5'-phosphate biosynthesis. Catalyzes the hydrolysis of glutamine to glutamate and ammonia as part of the biosynthesis of pyridoxal 5'-phosphate. The resulting ammonia molecule is channeled to the active site of PdxS. This Picrophilus torridus (strain ATCC 700027 / DSM 9790 / JCM 10055 / NBRC 100828 / KAW 2/3) protein is Pyridoxal 5'-phosphate synthase subunit PdxT.